The primary structure comprises 485 residues: NADH-quinone oxidoreductase subunit N (485 aa).

The next 14 membrane-spanning stretches (helical) occupy residues Leu-8–Ile-28, Phe-35–Val-55, Leu-75–Leu-95, Phe-105–Leu-125, Ala-127–Phe-147, Tyr-159–Ala-179, Leu-203–Phe-223, Pro-235–Met-255, Val-271–Gln-291, Leu-297–Gln-317, Val-326–Leu-346, Ala-374–Gly-394, Trp-408–Val-430, and Ile-455–Ile-475.

This sequence belongs to the complex I subunit 2 family. In terms of assembly, NDH-1 is composed of 13 different subunits. Subunits NuoA, H, J, K, L, M, N constitute the membrane sector of the complex.

It is found in the cell inner membrane. It catalyses the reaction a quinone + NADH + 5 H(+)(in) = a quinol + NAD(+) + 4 H(+)(out). Its function is as follows. NDH-1 shuttles electrons from NADH, via FMN and iron-sulfur (Fe-S) centers, to quinones in the respiratory chain. The immediate electron acceptor for the enzyme in this species is believed to be ubiquinone. Couples the redox reaction to proton translocation (for every two electrons transferred, four hydrogen ions are translocated across the cytoplasmic membrane), and thus conserves the redox energy in a proton gradient. This is NADH-quinone oxidoreductase subunit N from Klebsiella pneumoniae (strain 342).